The chain runs to 400 residues: 2-octaprenylphenol hydroxylase (400 aa).

Residues 49–52 (RVSA) and 297–303 (LAGQGVN) each bind FAD.

The protein belongs to the UbiH/COQ6 family. As to quaternary structure, homotetramer. Component of the Ubi complex metabolon, which regroups five ubiquinone biosynthesis proteins (UbiE, UbiF, UbiG, UbiH and UbiI) and two accessory factors (UbiK and the lipid-binding protein UbiJ). Requires FAD as cofactor.

Its subcellular location is the cytoplasm. The enzyme catalyses 2-all-trans-octaprenylphenol + NADPH + O2 + H(+) = 3-(all-trans-octaprenyl)benzene-1,2-diol + NADP(+) + H2O. It catalyses the reaction a 2-(all-trans-polyprenyl)phenol + NADPH + O2 + H(+) = a 3-(all-trans-polyprenyl)benzene-1,2-diol + NADP(+) + H2O. Its pathway is cofactor biosynthesis; ubiquinone biosynthesis. In terms of biological role, FAD-dependent monooxygenase required for the aerobic hydroxylation of 2-octaprenylphenol to 2-octaprenyl-6-hydroxy-phenol, the first hydroxylation step in coenzyme Q (ubiquinone) biosynthesis. In Escherichia coli (strain K12), this protein is 2-octaprenylphenol hydroxylase.